We begin with the raw amino-acid sequence, 657 residues long: uncharacterized protein (657 aa).

The first 26 residues, M1–S26, serve as a signal peptide directing secretion. C27 carries N-palmitoyl cysteine lipidation. The S-diacylglycerol cysteine moiety is linked to residue C27. Disordered stretches follow at residues I291–T316, R468–I496, and K516–N563. A compositionally biased stretch (polar residues) spans K294 to S304. Over residues L469–I495 the composition is skewed to basic and acidic residues. The span at K516–T525 shows a compositional bias: polar residues. Positions E526 to G545 are enriched in basic and acidic residues. A compositionally biased stretch (low complexity) spans K546 to G559.

The protein to T.pallidum TmpC.

Its subcellular location is the cell membrane. This is an uncharacterized protein from Mycoplasma pneumoniae (strain ATCC 29342 / M129 / Subtype 1) (Mycoplasmoides pneumoniae).